The sequence spans 654 residues: Cytochrome B pre-mRNA-processing protein 1 (654 aa).

Its subcellular location is the mitochondrion. Its function is as follows. Responsible for conferring a stable 5'-end on cytochrome b mRNA. This Saccharomyces cerevisiae (strain ATCC 204508 / S288c) (Baker's yeast) protein is Cytochrome B pre-mRNA-processing protein 1 (CBP1).